The sequence spans 351 residues: Adenine deaminase (351 aa).

Residues H20, H22, and H200 each coordinate Zn(2+). The active-site Proton donor is the E203. Residue D281 participates in Zn(2+) binding. D282 contacts substrate.

The protein belongs to the metallo-dependent hydrolases superfamily. Adenosine and AMP deaminases family. Adenine deaminase type 2 subfamily. Requires Zn(2+) as cofactor.

It catalyses the reaction adenine + H2O + H(+) = hypoxanthine + NH4(+). Its function is as follows. Catalyzes the hydrolytic deamination of adenine to hypoxanthine. Plays an important role in the purine salvage pathway and in nitrogen catabolism. The polypeptide is Adenine deaminase (Cupriavidus necator (strain ATCC 17699 / DSM 428 / KCTC 22496 / NCIMB 10442 / H16 / Stanier 337) (Ralstonia eutropha)).